A 336-amino-acid chain; its full sequence is Anthranilate phosphoribosyltransferase (336 aa).

5-phospho-alpha-D-ribose 1-diphosphate contacts are provided by residues G78, 81–82 (GD), T86, 88–91 (NVST), 106–114 (KHGNYSVSS), and S118. G78 is a binding site for anthranilate. S90 contributes to the Mg(2+) binding site. Position 109 (N109) interacts with anthranilate. R164 contributes to the anthranilate binding site. Positions 222 and 223 each coordinate Mg(2+).

Belongs to the anthranilate phosphoribosyltransferase family. In terms of assembly, homodimer. Mg(2+) is required as a cofactor.

It carries out the reaction N-(5-phospho-beta-D-ribosyl)anthranilate + diphosphate = 5-phospho-alpha-D-ribose 1-diphosphate + anthranilate. It participates in amino-acid biosynthesis; L-tryptophan biosynthesis; L-tryptophan from chorismate: step 2/5. Its function is as follows. Catalyzes the transfer of the phosphoribosyl group of 5-phosphorylribose-1-pyrophosphate (PRPP) to anthranilate to yield N-(5'-phosphoribosyl)-anthranilate (PRA). In Halobacterium salinarum (strain ATCC 29341 / DSM 671 / R1), this protein is Anthranilate phosphoribosyltransferase.